The following is a 400-amino-acid chain: 1-deoxy-D-xylulose 5-phosphate reductoisomerase (400 aa).

Residues threonine 10, glycine 11, serine 12, isoleucine 13, glycine 36, asparagine 38, and asparagine 124 each coordinate NADPH. A 1-deoxy-D-xylulose 5-phosphate-binding site is contributed by lysine 125. Glutamate 126 contacts NADPH. Aspartate 150 lines the Mn(2+) pocket. 4 residues coordinate 1-deoxy-D-xylulose 5-phosphate: serine 151, glutamate 152, serine 186, and histidine 209. Mn(2+) is bound at residue glutamate 152. Glycine 215 is an NADPH binding site. 1-deoxy-D-xylulose 5-phosphate is bound by residues serine 222, asparagine 227, lysine 228, and glutamate 231. Position 231 (glutamate 231) interacts with Mn(2+).

Belongs to the DXR family. The cofactor is Mg(2+). It depends on Mn(2+) as a cofactor.

The enzyme catalyses 2-C-methyl-D-erythritol 4-phosphate + NADP(+) = 1-deoxy-D-xylulose 5-phosphate + NADPH + H(+). The protein operates within isoprenoid biosynthesis; isopentenyl diphosphate biosynthesis via DXP pathway; isopentenyl diphosphate from 1-deoxy-D-xylulose 5-phosphate: step 1/6. Catalyzes the NADPH-dependent rearrangement and reduction of 1-deoxy-D-xylulose-5-phosphate (DXP) to 2-C-methyl-D-erythritol 4-phosphate (MEP). This is 1-deoxy-D-xylulose 5-phosphate reductoisomerase from Aliivibrio fischeri (strain ATCC 700601 / ES114) (Vibrio fischeri).